The following is a 161-amino-acid chain: SsrA-binding protein (161 aa).

Belongs to the SmpB family.

It is found in the cytoplasm. Required for rescue of stalled ribosomes mediated by trans-translation. Binds to transfer-messenger RNA (tmRNA), required for stable association of tmRNA with ribosomes. tmRNA and SmpB together mimic tRNA shape, replacing the anticodon stem-loop with SmpB. tmRNA is encoded by the ssrA gene; the 2 termini fold to resemble tRNA(Ala) and it encodes a 'tag peptide', a short internal open reading frame. During trans-translation Ala-aminoacylated tmRNA acts like a tRNA, entering the A-site of stalled ribosomes, displacing the stalled mRNA. The ribosome then switches to translate the ORF on the tmRNA; the nascent peptide is terminated with the 'tag peptide' encoded by the tmRNA and targeted for degradation. The ribosome is freed to recommence translation, which seems to be the essential function of trans-translation. The chain is SsrA-binding protein from Vibrio campbellii (strain ATCC BAA-1116).